The chain runs to 499 residues: MPDRVRIFDTTLRDGEQTPGVSLTVEEKVEIARKLDEFGVDTIEAGFPVASEGEFEAVRAIAGEELDAEICGLARCVKGDIDAAIDADVDCVHVFIATSDIHLRYKLEMSREEALERAIEGVEYASDHGVTVEFSAEDATRTDRDYLLEVYKATVEAGADRVNVPDTVGVMTPPEMYRLTAEVVDAVDVPVSVHCHNDFGMAVANSLAAVEAGAEQVHVTVNGIGERAGNASLEQVVMALKALYDIELDVRTEMLVELSRLVERLTGVVVPPNTPIVGENAFAHESGIHSHGVIKKAETYEPIRPEDVGHRRRIVLGKHAGRHAIKKKLEEMGIEVTEEQLDEIVRRVKELGDKGKRVTEDDLEAIARDVVGEVPESEAAVKLEEIAVMTGNKFTPTASVRVYLDGEEHEAASTGVGSVDAAIRALREAIEELGMDVELKEYRLEAITGGTDALAEVTVRLEDEDGNVTTARGAAEDIVMASVKAFVRGVNRLARRRRD.

The region spanning 5–256 (VRIFDTTLRD…ELDVRTEMLV (252 aa)) is the Pyruvate carboxyltransferase domain. Asp14, His194, His196, and Asn230 together coordinate a divalent metal cation.

It belongs to the alpha-IPM synthase/homocitrate synthase family. In terms of assembly, homodimer. Requires a divalent metal cation as cofactor.

The catalysed reaction is 3-methyl-2-oxobutanoate + acetyl-CoA + H2O = (2S)-2-isopropylmalate + CoA + H(+). Its pathway is amino-acid biosynthesis; L-leucine biosynthesis; L-leucine from 3-methyl-2-oxobutanoate: step 1/4. Its function is as follows. Catalyzes the condensation of the acetyl group of acetyl-CoA with 3-methyl-2-oxobutanoate (2-oxoisovalerate) to form 3-carboxy-3-hydroxy-4-methylpentanoate (2-isopropylmalate). The protein is Probable 2-isopropylmalate synthase (leuA) of Methanopyrus kandleri (strain AV19 / DSM 6324 / JCM 9639 / NBRC 100938).